We begin with the raw amino-acid sequence, 726 residues long: Probable alpha-galactosidase G (726 aa).

3 N-linked (GlcNAc...) asparagine glycosylation sites follow: asparagine 23, asparagine 166, and asparagine 456. Aspartate 485 (nucleophile) is an active-site residue. The Proton donor role is filled by aspartate 547. N-linked (GlcNAc...) asparagine glycans are attached at residues asparagine 657 and asparagine 673.

This sequence belongs to the glycosyl hydrolase 36 family. In terms of assembly, homotetramer. Mg(2+) is required as a cofactor. It depends on NAD(+) as a cofactor.

The protein resides in the secreted. It catalyses the reaction Hydrolysis of terminal, non-reducing alpha-D-galactose residues in alpha-D-galactosides, including galactose oligosaccharides, galactomannans and galactolipids.. Hydrolyzes a variety of simple alpha-D-galactoside as well as more complex molecules such as oligosaccharides and polysaccharides. Not active on paranitrophenyl-alpha-galactoside and raffinose. This chain is Probable alpha-galactosidase G (aglG), found in Emericella nidulans (strain FGSC A4 / ATCC 38163 / CBS 112.46 / NRRL 194 / M139) (Aspergillus nidulans).